A 147-amino-acid chain; its full sequence is MPHGTLEVVLVSAKGLEDADFLNNMDPYVQLTCRTQDQKSNVAEGMGTTPEWNETFIFTVSEGTTELKAKIFDKDVGTEDDAVGEATIPLEPVFVEGSIPPTAYNVVKDEEYKGEIWVALSFKPSENRSRGMDEESYGGWKNSEASY.

Residues 1-103 (MPHGTLEVVL…FVEGSIPPTA (103 aa)) form the C2 domain. Ca(2+)-binding residues include Asp20, Asp26, Asp73, Asp75, and Asp81. The segment at 126–147 (ENRSRGMDEESYGGWKNSEASY) is disordered.

Requires Ca(2+) as cofactor.

Binds to both sense and antisense RNA. Can also bind sheared DNA and dodecamer DNA with a low affinity. Interacts with mesophyll plasmodesmata to mediate its own cell-to-cell transport and potentiate RNA trafficking. May play a role in plant defense signaling. This is 16 kDa phloem protein 2 from Arabidopsis thaliana (Mouse-ear cress).